Here is a 49-residue protein sequence, read N- to C-terminus: uncharacterized protein (49 aa).

The helical transmembrane segment at 16 to 36 (WTCHTGFYLMILLVLFFMYGF) threads the bilayer.

It is found in the cell membrane. This is an uncharacterized protein from Bacillus subtilis (strain 168).